Consider the following 1153-residue polypeptide: Probable RNA-dependent RNA polymerase 3 (1153 aa).

Belongs to the RdRP family. As to expression, expressed in shoot apical meristem (SAM) and panicles.

It carries out the reaction RNA(n) + a ribonucleoside 5'-triphosphate = RNA(n+1) + diphosphate. Probably involved in the RNA silencing pathway and required for the generation of small interfering RNAs (siRNAs). The polypeptide is Probable RNA-dependent RNA polymerase 3 (RDR3) (Oryza sativa subsp. japonica (Rice)).